Here is a 164-residue protein sequence, read N- to C-terminus: Phosphopantetheine adenylyltransferase (164 aa).

Serine 9 is a substrate binding site. ATP contacts are provided by residues 9–10 (SF) and histidine 17. Substrate-binding residues include lysine 41, leucine 73, and lysine 87. Residues 88-90 (GLR), glutamate 98, and 123-129 (YSYISSS) each bind ATP.

This sequence belongs to the bacterial CoaD family. In terms of assembly, homohexamer. It depends on Mg(2+) as a cofactor.

It localises to the cytoplasm. It carries out the reaction (R)-4'-phosphopantetheine + ATP + H(+) = 3'-dephospho-CoA + diphosphate. The protein operates within cofactor biosynthesis; coenzyme A biosynthesis; CoA from (R)-pantothenate: step 4/5. Reversibly transfers an adenylyl group from ATP to 4'-phosphopantetheine, yielding dephospho-CoA (dPCoA) and pyrophosphate. The polypeptide is Phosphopantetheine adenylyltransferase (Clostridium perfringens (strain ATCC 13124 / DSM 756 / JCM 1290 / NCIMB 6125 / NCTC 8237 / Type A)).